The primary structure comprises 138 residues: MSATLRLLCLMACCVALAVANRPNYGGSGYGASYGDVVKAAETAEAQASALTNAAGAAASAAKLDGADWNSLNRYGWEQGRPLLAKPYGPLDPLYAAALPPRSFVAEVDPVFKKSQYGGSYGENAYLKTDAKLGVVAI.

An N-terminal signal peptide occupies residues 1 to 20; that stretch reads MSATLRLLCLMACCVALAVA.

Belongs to the chorion protein S16 family.

Its subcellular location is the secreted. Functionally, chorion membrane (egg shell) protein; plays a role in protecting the egg from the environment. This is Chorion protein S16 (Cp16) from Drosophila melanogaster (Fruit fly).